We begin with the raw amino-acid sequence, 253 residues long: MRILVANDDGYLAPGLAALVAVCKEFGDVEVVAPEQNASGTSNALTLTRPLSVHTAANGFRYVNGTPSDCVHVALTGLLAQRPDLVVSGINNGANMGDDTIYSGTVAAAMEGYLFGVPAIAFSLVDKGWSHLDAATRAARGVLAHVLASGWHREHWLLNVNIPSRPDAAELPLQITRLGKRHASEPVICQTSPRGEPIYWIGAAGDAREAGEGTDFHAVANGHVSITPLQVDLTDHGRLGTWSQRWQDHGSRA.

Asp8, Asp9, Ser39, and Asn91 together coordinate a divalent metal cation.

The protein belongs to the SurE nucleotidase family. A divalent metal cation serves as cofactor.

The protein localises to the cytoplasm. The enzyme catalyses a ribonucleoside 5'-phosphate + H2O = a ribonucleoside + phosphate. Functionally, nucleotidase that shows phosphatase activity on nucleoside 5'-monophosphates. This is 5'-nucleotidase SurE from Leptothrix cholodnii (strain ATCC 51168 / LMG 8142 / SP-6) (Leptothrix discophora (strain SP-6)).